The following is a 466-amino-acid chain: Gastric inhibitory polypeptide receptor (466 aa).

The N-terminal stretch at 1 to 21 (MTTSPILQLLLRLSLCGLLLQ) is a signal peptide. The Extracellular portion of the chain corresponds to 22-138 (RAETGSKGQT…DQRLILERLQ (117 aa)). Disulfide bonds link Cys-46–Cys-70, Cys-61–Cys-103, and Cys-84–Cys-118. 2 N-linked (GlcNAc...) asparagine glycosylation sites follow: Asn-62 and Asn-77. A helical membrane pass occupies residues 139 to 161 (VMYTVGYSLSLATLLLALLILSL). Residues 162–169 (FRRLHCTR) lie on the Cytoplasmic side of the membrane. The helical transmembrane segment at 170–189 (NYIHINLFTSFMLRAAAILS) threads the bilayer. Residues 190-217 (RDRLLPRPGPYLGDQALALWNQALAACR) lie on the Extracellular side of the membrane. A helical membrane pass occupies residues 218-242 (TAQIVTQYCVGANYTWLLVEGVYLH). Over 243–254 (SLLVLVGGSEEG) the chain is Cytoplasmic. Residues 255–278 (HFRYYLLLGWGAPALFVIPWVIVR) form a helical membrane-spanning segment. Residues 279–293 (YLYENTQCWERNEVK) are Extracellular-facing. Residues 294–319 (AIWWIIRTPILMTILINFLIFIRILG) traverse the membrane as a helical segment. Residues 320-341 (ILLSKLRTRQMRCRDYRLRLAR) are Cytoplasmic-facing. A helical transmembrane segment spans residues 342–362 (STLTLVPLLGVHEVVFAPVTE). The Extracellular portion of the chain corresponds to 363 to 377 (EQARGALRFAKLGFE). Residues 378 to 398 (IFLSSFQGFLVSVLYCFINKE) form a helical membrane-spanning segment. The Cytoplasmic segment spans residues 399–466 (VQSEIRRGWH…EASRELESYC (68 aa)). Residues 427-466 (AFRALPSGSGPGEVPTSRGLSSGTLPGPGNEASRELESYC) form a disordered region.

It belongs to the G-protein coupled receptor 2 family. May form homodimers and heterodimers with GLP1R. N-glycosylation is required for cell surface expression and lengthens receptor half-life by preventing degradation in the ER.

The protein localises to the cell membrane. Functionally, this is a receptor for GIP. The activity of this receptor is mediated by G proteins which activate adenylyl cyclase. This Homo sapiens (Human) protein is Gastric inhibitory polypeptide receptor (GIPR).